The sequence spans 258 residues: Phosphate import ATP-binding protein PstB (258 aa).

Residues 13–253 form the ABC transporter domain; that stretch reads ITVENLNLWY…PREKSTEDYI (241 aa). 45 to 52 is a binding site for ATP; it reads GPSGCGKS.

It belongs to the ABC transporter superfamily. Phosphate importer (TC 3.A.1.7) family. As to quaternary structure, the complex is composed of two ATP-binding proteins (PstB), two transmembrane proteins (PstC and PstA) and a solute-binding protein (PstS).

It is found in the cell membrane. It carries out the reaction phosphate(out) + ATP + H2O = ADP + 2 phosphate(in) + H(+). In terms of biological role, part of the ABC transporter complex PstSACB involved in phosphate import. Responsible for energy coupling to the transport system. This chain is Phosphate import ATP-binding protein PstB, found in Methanosarcina mazei (strain ATCC BAA-159 / DSM 3647 / Goe1 / Go1 / JCM 11833 / OCM 88) (Methanosarcina frisia).